The primary structure comprises 398 residues: Isopenicillin N epimerase (398 aa).

N6-(pyridoxal phosphate)lysine is present on K219. The interval P243–G264 is disordered. Residues P251–G264 show a composition bias toward basic and acidic residues.

Belongs to the class-V pyridoxal-phosphate-dependent aminotransferase family. Pyridoxal 5'-phosphate serves as cofactor.

It catalyses the reaction isopenicillin N = penicillin N. Its pathway is antibiotic biosynthesis; cephalosporin C biosynthesis. Its function is as follows. Catalyzes the reversible isomerization between isopenicillin N and penicillin N. The sequence is that of Isopenicillin N epimerase (cefD) from Amycolatopsis lactamdurans (Nocardia lactamdurans).